The chain runs to 147 residues: Sulfur acceptor protein CsdE (147 aa).

The Cysteine persulfide intermediate role is filled by cysteine 61. Position 61 is a cysteine persulfide (cysteine 61).

This sequence belongs to the SufE family. Homodimer. Forms a heterodimer with CsdA. Interacts with CsdA and with TcdA/CsdL.

Its function is as follows. Stimulates the cysteine desulfurase activity of CsdA. Contains a cysteine residue (Cys-61) that acts to accept sulfur liberated via the desulfurase activity of CsdA. May be able to transfer sulfur to TcdA/CsdL. Seems to support the function of TcdA in the generation of cyclic threonylcarbamoyladenosine at position 37 (ct(6)A37) in tRNAs that read codons beginning with adenine. Does not appear to participate in Fe/S biogenesis. The sequence is that of Sulfur acceptor protein CsdE (csdE) from Escherichia coli (strain K12).